The following is a 611-amino-acid chain: DNA mismatch repair protein MutL (611 aa).

Belongs to the DNA mismatch repair MutL/HexB family.

In terms of biological role, this protein is involved in the repair of mismatches in DNA. It is required for dam-dependent methyl-directed DNA mismatch repair. May act as a 'molecular matchmaker', a protein that promotes the formation of a stable complex between two or more DNA-binding proteins in an ATP-dependent manner without itself being part of a final effector complex. The protein is DNA mismatch repair protein MutL of Borrelia garinii subsp. bavariensis (strain ATCC BAA-2496 / DSM 23469 / PBi) (Borreliella bavariensis).